A 309-amino-acid chain; its full sequence is 15-cis-phytoene synthase (309 aa).

The disordered stretch occupies residues 290–309; that stretch reads LTSRMRAHPPRPAHLWQRPL.

This sequence belongs to the phytoene/squalene synthase family. The cofactor is ATP. Mn(2+) is required as a cofactor. Requires Mg(2+) as cofactor.

It catalyses the reaction 2 (2E,6E,10E)-geranylgeranyl diphosphate = 15-cis-phytoene + 2 diphosphate. It participates in carotenoid biosynthesis; phytoene biosynthesis. Inhibited by phosphate ions and squalestatin. In terms of biological role, involved in the biosynthesis of carotenoids. Catalyzes the condensation of two molecules of geranylgeranyl diphosphate (GGPP) to give prephytoene diphosphate (PPPP) and the subsequent rearrangement of the cyclopropylcarbinyl intermediate to yield the 15-cis-phytoene isomer. The sequence is that of 15-cis-phytoene synthase (crtB) from Pantoea ananas (Erwinia uredovora).